The following is a 381-amino-acid chain: MKRDYYEILGVARNATPEEIKKAYRKLARKYHPDVNKDDPNAAEKFKEINEAYEVLSDPEKRARYDQFGHAGVDGNFAGQGGFGGGAGINFEDIFSGFGGFGDLFDMVFGSGRKARQGPVPGDDIEAVLELTLEEAVFGGEKELRVTRTETCGHCHGNGAEPGTPIITCPTCQGRGQIHQEVKTLFGRMVRSQVCSTCRGEGKIPKTPCRECGGSGLVRKTRSITVKIPPGIDHGHRLRIAGGGEAGRFGGPPGDLYVYIKIKPHKLFKREDIHLKLEKEISFVQAALGAKVEIPTIDGGTEILEIPEGTQTGTVFTIKGKGVPVVNGSGRGNLYVTVKVVTPTKLTERQKQLLREFEEISKQKEETFKEKFNKFKNKFAL.

The J domain maps to 4–69 (DYYEILGVAR…EKRARYDQFG (66 aa)). Residues 139 to 221 (GGEKELRVTR…CGGSGLVRKT (83 aa)) form a CR-type zinc finger. Zn(2+) contacts are provided by cysteine 152, cysteine 155, cysteine 169, cysteine 172, cysteine 195, cysteine 198, cysteine 209, and cysteine 212. CXXCXGXG motif repeat units follow at residues 152 to 159 (CGHCHGNG), 169 to 176 (CPTCQGRG), 195 to 202 (CSTCRGEG), and 209 to 216 (CRECGGSG).

The protein belongs to the DnaJ family. As to quaternary structure, homodimer. It depends on Zn(2+) as a cofactor.

The protein resides in the cytoplasm. In terms of biological role, participates actively in the response to hyperosmotic and heat shock by preventing the aggregation of stress-denatured proteins and by disaggregating proteins, also in an autonomous, DnaK-independent fashion. Unfolded proteins bind initially to DnaJ; upon interaction with the DnaJ-bound protein, DnaK hydrolyzes its bound ATP, resulting in the formation of a stable complex. GrpE releases ADP from DnaK; ATP binding to DnaK triggers the release of the substrate protein, thus completing the reaction cycle. Several rounds of ATP-dependent interactions between DnaJ, DnaK and GrpE are required for fully efficient folding. Also involved, together with DnaK and GrpE, in the DNA replication of plasmids through activation of initiation proteins. This is Chaperone protein DnaJ from Carboxydothermus hydrogenoformans (strain ATCC BAA-161 / DSM 6008 / Z-2901).